The sequence spans 400 residues: MTQFASPVLHSLLDTDAYKLHMQQAVFHHYYDVQVAAEFRCRGDDLLGIYADAIREQVDAMQHLRLQEDEFQWLSGLPFFKPDYLNWLREFRYNPAQVCVTNDNGKLNIRLTGSWREVIMWEVPLLAVISELVHHYRSPNAGVDQALDALESKLVDFTALTANLDMSRFHLMDFGTRRRFSREVQQAIVKRLQQESWFVGTSNYDLARRLALTPMGTQAHEWFQAHQQINPDLATSQRAALAAWLNEYPDQLGIALTDCITMDAFLRDFGIEFASRYQGLRHDSGDPVAWGEKAIAHYEKLGIDPLTKTLVFSDNLDLPKAVELYRHFASRVQLSFGIGTRLTCDIPQVKPLNIVIKLVECNGKPVAKLSDSPGKTICHDKAFVRALRKAFDLPQVRKAS.

Phosphohistidine; by autocatalysis is present on His220.

The protein belongs to the NAPRTase family. Post-translationally, transiently phosphorylated on a His residue during the reaction cycle. Phosphorylation strongly increases the affinity for substrates and increases the rate of nicotinate D-ribonucleotide production. Dephosphorylation regenerates the low-affinity form of the enzyme, leading to product release.

The catalysed reaction is nicotinate + 5-phospho-alpha-D-ribose 1-diphosphate + ATP + H2O = nicotinate beta-D-ribonucleotide + ADP + phosphate + diphosphate. Its pathway is cofactor biosynthesis; NAD(+) biosynthesis; nicotinate D-ribonucleotide from nicotinate: step 1/1. In terms of biological role, catalyzes the synthesis of beta-nicotinate D-ribonucleotide from nicotinate and 5-phospho-D-ribose 1-phosphate at the expense of ATP. This chain is Nicotinate phosphoribosyltransferase, found in Salmonella typhi.